The following is a 436-amino-acid chain: Transcription factor Sox-10 (436 aa).

Disordered stretches follow at residues 1 to 55 (MSDD…ERFP), 145 to 183 (RLRM…AEGG), 195 to 257 (HLDH…DFGN), 322 to 346 (PQTD…QPST), and 413 to 436 (SPSV…LSRP). A Glycyl lysine isopeptide (Lys-Gly) (interchain with G-Cter in SUMO) cross-link involves residue lysine 44. The segment at 48-88 (DSEDERFPVCIREAVSQVLSGYDWTLVPMPVRVNGGSKSKP) is dimerization (DIM). The segment at residues 90–158 (VKRPMNAFMV…QHKKDHPDYK (69 aa)) is a DNA-binding region (HMG box). Over residues 145–159 (RLRMQHKKDHPDYKY) the composition is skewed to basic and acidic residues. Polar residues-rich tracts occupy residues 205 to 215 (SDGNSEHSAGQ) and 331 to 346 (KTES…QPST). A transactivation domain (TAM) region spans residues 209–295 (SEHSAGQSHG…NGHAGHPSHI (87 aa)). Positions 327 to 436 (KAQVKTESSS…QPVYTTLSRP (110 aa)) are transactivation domain (TAC). Lysine 331 is covalently cross-linked (Glycyl lysine isopeptide (Lys-Gly) (interchain with G-Cter in SUMO)).

In terms of assembly, interacts with the sumoylation factors ube2i/ubc9 and sumo1. In terms of processing, sumoylated.

Its subcellular location is the cytoplasm. It is found in the nucleus. Its function is as follows. Acts early in neural crest formation, functioning redundantly with the other group E Sox factors sox8 and sox9 to induce neural crest progenitors. Acts downstream of wnt-signaling at the neural plate border. Involved in the specification of neural crest progenitors fated to form the pigment cell lineage. This Xenopus tropicalis (Western clawed frog) protein is Transcription factor Sox-10.